We begin with the raw amino-acid sequence, 317 residues long: Beta-ketoacyl-[acyl-carrier-protein] synthase III (317 aa).

Catalysis depends on residues Cys-112 and His-244. The tract at residues 245-249 is ACP-binding; that stretch reads QANLR. Asn-274 is a catalytic residue.

Belongs to the thiolase-like superfamily. FabH family. As to quaternary structure, homodimer.

Its subcellular location is the cytoplasm. It catalyses the reaction malonyl-[ACP] + acetyl-CoA + H(+) = 3-oxobutanoyl-[ACP] + CO2 + CoA. It participates in lipid metabolism; fatty acid biosynthesis. Catalyzes the condensation reaction of fatty acid synthesis by the addition to an acyl acceptor of two carbons from malonyl-ACP. Catalyzes the first condensation reaction which initiates fatty acid synthesis and may therefore play a role in governing the total rate of fatty acid production. Possesses both acetoacetyl-ACP synthase and acetyl transacylase activities. Its substrate specificity determines the biosynthesis of branched-chain and/or straight-chain of fatty acids. This is Beta-ketoacyl-[acyl-carrier-protein] synthase III from Escherichia coli O9:H4 (strain HS).